Consider the following 324-residue polypeptide: tRNA U34 carboxymethyltransferase (324 aa).

Carboxy-S-adenosyl-L-methionine-binding positions include K91, W105, K110, G130, 152-154 (DPS), 181-182 (IE), M196, Y200, and R315.

This sequence belongs to the class I-like SAM-binding methyltransferase superfamily. CmoB family. Homotetramer.

The catalysed reaction is carboxy-S-adenosyl-L-methionine + 5-hydroxyuridine(34) in tRNA = 5-carboxymethoxyuridine(34) in tRNA + S-adenosyl-L-homocysteine + H(+). In terms of biological role, catalyzes carboxymethyl transfer from carboxy-S-adenosyl-L-methionine (Cx-SAM) to 5-hydroxyuridine (ho5U) to form 5-carboxymethoxyuridine (cmo5U) at position 34 in tRNAs. This chain is tRNA U34 carboxymethyltransferase, found in Aliivibrio fischeri (strain ATCC 700601 / ES114) (Vibrio fischeri).